The primary structure comprises 1187 residues: Nucleolar protein 6 (1187 aa).

Basic and acidic residues predominate over residues 1 to 20 (MGRIKENQSKKKTLLRDSKA). Disordered stretches follow at residues 1–64 (MGRI…FKHP) and 1134–1187 (REQR…SALC).

This sequence belongs to the NRAP family. As to quaternary structure, part of the small subunit (SSU) processome, composed of more than 70 proteins and the RNA chaperone small nucleolar RNA (snoRNA) U3.

The protein localises to the nucleus. The protein resides in the nucleolus. It is found in the chromosome. Part of the small subunit (SSU) processome, first precursor of the small eukaryotic ribosomal subunit. During the assembly of the SSU processome in the nucleolus, many ribosome biogenesis factors, an RNA chaperone and ribosomal proteins associate with the nascent pre-rRNA and work in concert to generate RNA folding, modifications, rearrangements and cleavage as well as targeted degradation of pre-ribosomal RNA by the RNA exosome. The protein is Nucleolar protein 6 of Drosophila mojavensis (Fruit fly).